The following is a 295-amino-acid chain: Ethanolamine ammonia-lyase small subunit (295 aa).

Adenosylcob(III)alamin contacts are provided by V207, E228, and C258.

It belongs to the EutC family. The basic unit is a heterodimer which dimerizes to form tetramers. The heterotetramers trimerize; 6 large subunits form a core ring with 6 small subunits projecting outwards. The cofactor is adenosylcob(III)alamin.

Its subcellular location is the bacterial microcompartment. It carries out the reaction ethanolamine = acetaldehyde + NH4(+). The protein operates within amine and polyamine degradation; ethanolamine degradation. Its function is as follows. Catalyzes the deamination of various vicinal amino-alcohols to oxo compounds. Allows this organism to utilize ethanolamine as the sole source of nitrogen and carbon in the presence of external vitamin B12. The polypeptide is Ethanolamine ammonia-lyase small subunit (Escherichia coli O81 (strain ED1a)).